The primary structure comprises 212 residues: uncharacterized protein (212 aa).

A helical membrane pass occupies residues 5–25 (IFIILIAVLLIGVNIKKIAAA).

It is found in the membrane. This is an uncharacterized protein from Borreliella burgdorferi (strain ATCC 35210 / DSM 4680 / CIP 102532 / B31) (Borrelia burgdorferi).